Consider the following 131-residue polypeptide: Small ribosomal subunit protein uS8 (131 aa).

This sequence belongs to the universal ribosomal protein uS8 family. In terms of assembly, part of the 30S ribosomal subunit. Contacts proteins S5 and S12.

In terms of biological role, one of the primary rRNA binding proteins, it binds directly to 16S rRNA central domain where it helps coordinate assembly of the platform of the 30S subunit. The sequence is that of Small ribosomal subunit protein uS8 from Erythrobacter litoralis (strain HTCC2594).